The chain runs to 184 residues: Heme transporter hrg-4 (184 aa).

Residues 19–39 (IGWTIFGIVFGISAILTYAIK) form a helical membrane-spanning segment. The N-linked (GlcNAc...) asparagine glycan is linked to asparagine 42. 3 helical membrane-spanning segments follow: residues 46-66 (TATTAIATLFACETLYLYWAL), 87-107 (VFIGLLGLLGCLVCYIIAGIT), and 124-146 (IYFSKFAAMYGENLWFTGSWSLV).

Belongs to the HRG family.

It is found in the cell membrane. Heme transporter that mediates heme uptake across the plasma membrane. The protein is Heme transporter hrg-4 of Caenorhabditis elegans.